The following is a 425-amino-acid chain: Enolase (425 aa).

A (2R)-2-phosphoglycerate-binding site is contributed by Gln163. Glu205 functions as the Proton donor in the catalytic mechanism. Mg(2+) contacts are provided by Asp242, Glu285, and Asp312. The (2R)-2-phosphoglycerate site is built by Lys337, Arg366, Ser367, and Lys388. Lys337 serves as the catalytic Proton acceptor.

It belongs to the enolase family. Requires Mg(2+) as cofactor.

The protein resides in the cytoplasm. Its subcellular location is the secreted. It is found in the cell surface. It catalyses the reaction (2R)-2-phosphoglycerate = phosphoenolpyruvate + H2O. The protein operates within carbohydrate degradation; glycolysis; pyruvate from D-glyceraldehyde 3-phosphate: step 4/5. Its function is as follows. Catalyzes the reversible conversion of 2-phosphoglycerate (2-PG) into phosphoenolpyruvate (PEP). It is essential for the degradation of carbohydrates via glycolysis. The chain is Enolase from Syntrophomonas wolfei subsp. wolfei (strain DSM 2245B / Goettingen).